A 109-amino-acid chain; its full sequence is Aquaporin-2 (109 aa).

Residues 1–6 (SIAFSR) are Cytoplasmic-facing. The helical transmembrane segment at 7–27 (AVFTEFLATLLFVFFGLGSAL) threads the bilayer. Residues 28-35 (NWPQALPS) are Extracellular-facing. A helical membrane pass occupies residues 36–54 (VLQIAMAFGLAIGTLVQML). Over 55–59 (GHISG) the chain is Cytoplasmic. The discontinuously helical intramembrane region spans 60–69 (AHINPAVTVA). An NPA 1 motif is present at residues 63–65 (NPA). Topologically, residues 70-80 (CLVGCHISFLR) are cytoplasmic. The helical transmembrane segment at 81–102 (AAFYVAAQLLGAVAGAALLHEV) threads the bilayer. Residues 103–109 (TPPSIRG) are Extracellular-facing.

Belongs to the MIP/aquaporin (TC 1.A.8) family. As to quaternary structure, homotetramer. Post-translationally, serine phosphorylation is necessary and sufficient for expression at the apical membrane. Endocytosis is not phosphorylation-dependent. N-glycosylated.

It localises to the apical cell membrane. The protein resides in the basolateral cell membrane. Its subcellular location is the cell membrane. It is found in the cytoplasmic vesicle membrane. The protein localises to the golgi apparatus. It localises to the trans-Golgi network membrane. The catalysed reaction is H2O(in) = H2O(out). It catalyses the reaction glycerol(in) = glycerol(out). In terms of biological role, forms a water-specific channel that provides the plasma membranes of renal collecting duct with high permeability to water, thereby permitting water to move in the direction of an osmotic gradient. Plays an essential role in renal water homeostasis. Could also be permeable to glycerol. The sequence is that of Aquaporin-2 from Erinaceus europaeus (Western European hedgehog).